The chain runs to 257 residues: Flap endonuclease Xni (257 aa).

Asp-109 provides a ligand contact to Mg(2+). Residues 165-255 enclose the 5'-3' exonuclease domain; the sequence is LKPEQLADYW…FNLQDIRYEK (91 aa). The K(+) site is built by Leu-176, Ala-177, Ile-187, and Ile-190. Positions 189 to 194 are interaction with DNA; that stretch reads GIGPKA.

Belongs to the Xni family. It depends on Mg(2+) as a cofactor. Requires K(+) as cofactor.

Its function is as follows. Has flap endonuclease activity. During DNA replication, flap endonucleases cleave the 5'-overhanging flap structure that is generated by displacement synthesis when DNA polymerase encounters the 5'-end of a downstream Okazaki fragment. The sequence is that of Flap endonuclease Xni from Aliivibrio salmonicida (strain LFI1238) (Vibrio salmonicida (strain LFI1238)).